Consider the following 187-residue polypeptide: NADH-quinone oxidoreductase subunit B (187 aa).

4 residues coordinate [4Fe-4S] cluster: Cys-55, Cys-56, Cys-121, and Cys-150.

The protein belongs to the complex I 20 kDa subunit family. As to quaternary structure, NDH-1 is composed of 14 different subunits. Subunits NuoB, C, D, E, F, and G constitute the peripheral sector of the complex. The cofactor is [4Fe-4S] cluster.

It localises to the cell inner membrane. It carries out the reaction a quinone + NADH + 5 H(+)(in) = a quinol + NAD(+) + 4 H(+)(out). NDH-1 shuttles electrons from NADH, via FMN and iron-sulfur (Fe-S) centers, to quinones in the respiratory chain. The immediate electron acceptor for the enzyme in this species is believed to be ubiquinone. Couples the redox reaction to proton translocation (for every two electrons transferred, four hydrogen ions are translocated across the cytoplasmic membrane), and thus conserves the redox energy in a proton gradient. This Bdellovibrio bacteriovorus (strain ATCC 15356 / DSM 50701 / NCIMB 9529 / HD100) protein is NADH-quinone oxidoreductase subunit B.